A 501-amino-acid chain; its full sequence is Aldehyde dehydrogenase 1A1 (501 aa).

S2 is modified (N-acetylserine). N6-acetyllysine is present on residues K91 and K128. Residues 167–170 (IPWN), 193–196 (KPAE), 226–227 (GP), and 246–247 (GS) contribute to the NAD(+) site. N6-acetyllysine is present on K252. The active-site Proton acceptor is E269. An NAD(+)-binding site is contributed by 269–271 (ELG). C303 serves as the catalytic Nucleophile. The segment at 336–501 (LTPGVTQGPQ…VTVKISQKNS (166 aa)) is mediates interaction with PRMT3. T337 bears the Phosphothreonine mark. 349–353 (EQYDK) serves as a coordination point for NAD(+). N6-acetyllysine is present on residues K353 and K367. 400 to 402 (EIF) serves as a coordination point for NAD(+). K410 is subject to N6-acetyllysine. Position 413 is a phosphoserine (S413). K419, K435, and K495 each carry N6-acetyllysine.

The protein belongs to the aldehyde dehydrogenase family. As to quaternary structure, homotetramer. Interacts with PRMT3; the interaction is direct, inhibits ALDH1A1 aldehyde dehydrogenase activity and is independent of the methyltransferase activity of PRMT3. The N-terminus is blocked most probably by acetylation. In terms of tissue distribution, expressed by erythrocytes (at protein level).

Its subcellular location is the cytoplasm. It localises to the cytosol. The protein localises to the cell projection. It is found in the axon. It catalyses the reaction an aldehyde + NAD(+) + H2O = a carboxylate + NADH + 2 H(+). The catalysed reaction is all-trans-retinal + NAD(+) + H2O = all-trans-retinoate + NADH + 2 H(+). The enzyme catalyses 9-cis-retinal + NAD(+) + H2O = 9-cis-retinoate + NADH + 2 H(+). It carries out the reaction 11-cis-retinal + NAD(+) + H2O = 11-cis-retinoate + NADH + 2 H(+). It catalyses the reaction 13-cis-retinal + NAD(+) + H2O = 13-cis-retinoate + NADH + 2 H(+). The catalysed reaction is 3-deoxyglucosone + NAD(+) + H2O = 2-dehydro-3-deoxy-D-gluconate + NADH + 2 H(+). The enzyme catalyses (E)-4-hydroxynon-2-enal + NAD(+) + H2O = (E)-4-hydroxynon-2-enoate + NADH + 2 H(+). It carries out the reaction malonaldehyde + NAD(+) + H2O = 3-oxopropanoate + NADH + 2 H(+). It catalyses the reaction hexanal + NAD(+) + H2O = hexanoate + NADH + 2 H(+). The catalysed reaction is propanal + NAD(+) + H2O = propanoate + NADH + 2 H(+). The enzyme catalyses acetaldehyde + NAD(+) + H2O = acetate + NADH + 2 H(+). It carries out the reaction benzaldehyde + NAD(+) + H2O = benzoate + NADH + 2 H(+). It catalyses the reaction 4-aminobutanal + NAD(+) + H2O = 4-aminobutanoate + NADH + 2 H(+). It participates in cofactor metabolism; retinol metabolism. With respect to regulation, inhibited by citral, disulfiram, and cyanamide. Activated by diethylstilbestrol. Inhibited by duocarmycin analogs. Its function is as follows. Cytosolic dehydrogenase that catalyzes the irreversible oxidation of a wide range of aldehydes to their corresponding carboxylic acid. Functions downstream of retinol dehydrogenases and catalyzes the oxidation of retinaldehyde into retinoic acid, the second step in the oxidation of retinol/vitamin A into retinoic acid. This pathway is crucial to control the levels of retinol and retinoic acid, two important molecules which excess can be teratogenic and cytotoxic. Also oxidizes aldehydes resulting from lipid peroxidation like (E)-4-hydroxynon-2-enal/HNE, malonaldehyde and hexanal that form protein adducts and are highly cytotoxic. By participating for instance to the clearance of (E)-4-hydroxynon-2-enal/HNE in the lens epithelium prevents the formation of HNE-protein adducts and lens opacification. Also functions downstream of fructosamine-3-kinase in the fructosamine degradation pathway by catalyzing the oxidation of 3-deoxyglucosone, the carbohydrate product of fructosamine 3-phosphate decomposition, which is itself a potent glycating agent that may react with lysine and arginine side-chains of proteins. Also has an aminobutyraldehyde dehydrogenase activity and is probably part of an alternative pathway for the biosynthesis of GABA/4-aminobutanoate in midbrain, thereby playing a role in GABAergic synaptic transmission. The protein is Aldehyde dehydrogenase 1A1 of Homo sapiens (Human).